A 397-amino-acid chain; its full sequence is Putative F-box protein At1g26510 (397 aa).

The interval 1–23 (MRTRSKKTKTVNNNNDLQKSEEK) is disordered. The 48-residue stretch at 24–71 (QKFDQLPLDLEIEMFRRLPLKSVARFLTLSKSCATTIRSPSFITSFPS) folds into the F-box domain.

In Arabidopsis thaliana (Mouse-ear cress), this protein is Putative F-box protein At1g26510.